The primary structure comprises 486 residues: Serine/threonine-protein kinase 32C (486 aa).

Residues 1–56 (MRSGAERRGSSAAASPGSPPPGRARPAGSDAPSALPPPAAGQPRARDSGDVRSQPR) form a disordered region. 3 positions are modified to phosphoserine: S10, S15, and S18. Low complexity predominate over residues 24–33 (ARPAGSDAPS). A Protein kinase domain is found at 93-353 (FQILRAIGKG…LQDVQAAPAL (261 aa)). ATP-binding positions include 99–107 (IGKGSFGKV) and K122. D216 (proton acceptor) is an active-site residue. Over residues 396 to 405 (HKKKKRLAKN) the composition is skewed to basic residues. Disordered regions lie at residues 396–419 (HKKKKRLAKNKSRDNSRDSSQSEN) and 444–486 (SQDL…AGSG).

The protein belongs to the protein kinase superfamily. Ser/Thr protein kinase family. Mg(2+) serves as cofactor.

The enzyme catalyses L-seryl-[protein] + ATP = O-phospho-L-seryl-[protein] + ADP + H(+). The catalysed reaction is L-threonyl-[protein] + ATP = O-phospho-L-threonyl-[protein] + ADP + H(+). This Homo sapiens (Human) protein is Serine/threonine-protein kinase 32C.